Here is a 170-residue protein sequence, read N- to C-terminus: Ubiquitin-conjugating enzyme E2 2 (170 aa).

The 147-residue stretch at 4 to 150 (PARRRLMRDF…VKETVEKSWE (147 aa)) folds into the UBC core domain. The active-site Glycyl thioester intermediate is the cysteine 88. Residues 148–170 (SWEDDLKDMDDGDDDDDDDDDDD) are disordered. Positions 152 to 170 (DLKDMDDGDDDDDDDDDDD) are enriched in acidic residues.

Belongs to the ubiquitin-conjugating enzyme family.

The protein localises to the cytoplasm. It is found in the nucleus. It carries out the reaction S-ubiquitinyl-[E1 ubiquitin-activating enzyme]-L-cysteine + [E2 ubiquitin-conjugating enzyme]-L-cysteine = [E1 ubiquitin-activating enzyme]-L-cysteine + S-ubiquitinyl-[E2 ubiquitin-conjugating enzyme]-L-cysteine.. The protein operates within protein modification; protein ubiquitination. Functionally, catalyzes the covalent attachment of ubiquitin to other proteins. Plays a role in transcription regulation by catalyzing the monoubiquitination of histone H2B to form H2BK123ub1. H2BK123ub1 gives a specific tag for epigenetic transcriptional activation and is also a prerequisite for H3K4me and H3K79me formation. Also involved in postreplication repair of UV-damaged DNA, in N-end rule-dependent protein degradation and in sporulation. This is Ubiquitin-conjugating enzyme E2 2 (UBC2) from Eremothecium gossypii (strain ATCC 10895 / CBS 109.51 / FGSC 9923 / NRRL Y-1056) (Yeast).